We begin with the raw amino-acid sequence, 184 residues long: MSLERAVRAKIASKRNPEMDKEAQEWIEAIIAEKFPAGQSYEDVLKDGQVLCKLINVLSPNAVPKVNSSGGQFKFMENINNFQKALKEYGVPDIDVFQTVDLYEKKDIANVTNTIFALGRATYKHADFKGPFLGPKPADECKRDFTEEQLKAGQTIVGLQAGSNKGATQAGQNLGAGRKILLGK.

One can recognise a Calponin-homology (CH) domain in the interval 17 to 122 (PEMDKEAQEW…NTIFALGRAT (106 aa)). One copy of the Calponin-like repeat lies at 157–181 (VGLQAGSNKGATQAGQNLGAGRKIL).

The protein belongs to the calponin family. Found in synchronous muscle; not found in asynchronous indirect flight muscle.

This Drosophila melanogaster (Fruit fly) protein is Muscle-specific protein 20 (Mp20).